The chain runs to 248 residues: tRNA N(3)-methylcytidine methyltransferase trm141 (248 aa).

Residues W23, Y27, G63, D86, D112, and I133 each contribute to the S-adenosyl-L-methionine site.

The protein belongs to the methyltransferase superfamily. METL family.

The protein localises to the cytoplasm. The protein resides in the nucleus. The catalysed reaction is cytidine(32) in tRNA(Ser) + S-adenosyl-L-methionine = N(3)-methylcytidine(32) in tRNA(Ser) + S-adenosyl-L-homocysteine + H(+). S-adenosyl-L-methionine-dependent methyltransferase that mediates N(3)-methylcytidine modification of residue 32 of the tRNA anticodon loop of tRNA(Ser). N(3)-methylcytidine methylation by trm141 requires the formation of N(6)-dimethylallyladenosine(37) (i6A37) by tit1 as prerequisite. Does not catalyze N(3)-methylcytidine modification of tRNA(Thr). This is tRNA N(3)-methylcytidine methyltransferase trm141 from Schizosaccharomyces pombe (strain 972 / ATCC 24843) (Fission yeast).